We begin with the raw amino-acid sequence, 204 residues long: Large ribosomal subunit protein uL4 (204 aa).

Positions 44 to 76 are disordered; the sequence is KRQGTQSAKTRSEVRGGGIKPWRQKGTGRARQG.

Belongs to the universal ribosomal protein uL4 family. Part of the 50S ribosomal subunit.

In terms of biological role, one of the primary rRNA binding proteins, this protein initially binds near the 5'-end of the 23S rRNA. It is important during the early stages of 50S assembly. It makes multiple contacts with different domains of the 23S rRNA in the assembled 50S subunit and ribosome. Forms part of the polypeptide exit tunnel. This chain is Large ribosomal subunit protein uL4, found in Clostridium perfringens (strain ATCC 13124 / DSM 756 / JCM 1290 / NCIMB 6125 / NCTC 8237 / Type A).